Consider the following 434-residue polypeptide: Trigger factor (434 aa).

The 86-residue stretch at 163–248 (GDRVTIDFEG…LTKIEAQHLP (86 aa)) folds into the PPIase FKBP-type domain.

It belongs to the FKBP-type PPIase family. Tig subfamily.

Its subcellular location is the cytoplasm. It catalyses the reaction [protein]-peptidylproline (omega=180) = [protein]-peptidylproline (omega=0). Functionally, involved in protein export. Acts as a chaperone by maintaining the newly synthesized protein in an open conformation. Functions as a peptidyl-prolyl cis-trans isomerase. This chain is Trigger factor, found in Methylibium petroleiphilum (strain ATCC BAA-1232 / LMG 22953 / PM1).